A 951-amino-acid chain; its full sequence is Glycine dehydrogenase (decarboxylating) 1 (951 aa).

Lys703 is subject to N6-(pyridoxal phosphate)lysine.

This sequence belongs to the GcvP family. In terms of assembly, the glycine cleavage system is composed of four proteins: P, T, L and H. Pyridoxal 5'-phosphate serves as cofactor.

It carries out the reaction N(6)-[(R)-lipoyl]-L-lysyl-[glycine-cleavage complex H protein] + glycine + H(+) = N(6)-[(R)-S(8)-aminomethyldihydrolipoyl]-L-lysyl-[glycine-cleavage complex H protein] + CO2. Its function is as follows. The glycine cleavage system catalyzes the degradation of glycine. The P protein binds the alpha-amino group of glycine through its pyridoxal phosphate cofactor; CO(2) is released and the remaining methylamine moiety is then transferred to the lipoamide cofactor of the H protein. In Pseudomonas fluorescens (strain ATCC BAA-477 / NRRL B-23932 / Pf-5), this protein is Glycine dehydrogenase (decarboxylating) 1.